Consider the following 377-residue polypeptide: Queuine tRNA-ribosyltransferase (377 aa).

Catalysis depends on D94, which acts as the Proton acceptor. Substrate contacts are provided by residues 94-98 (DSGGF), D148, Q191, and G218. Residues 249-255 (GVGTPDD) form an RNA binding region. D268 functions as the Nucleophile in the catalytic mechanism. The segment at 273–277 (TRAGR) is RNA binding; important for wobble base 34 recognition.

The protein belongs to the queuine tRNA-ribosyltransferase family. In terms of assembly, homodimer. Within each dimer, one monomer is responsible for RNA recognition and catalysis, while the other monomer binds to the replacement base PreQ1.

It carries out the reaction 7-aminomethyl-7-carbaguanine + guanosine(34) in tRNA = 7-aminomethyl-7-carbaguanosine(34) in tRNA + guanine. Its pathway is tRNA modification; tRNA-queuosine biosynthesis. Catalyzes the base-exchange of a guanine (G) residue with the queuine precursor 7-aminomethyl-7-deazaguanine (PreQ1) at position 34 (anticodon wobble position) in tRNAs with GU(N) anticodons (tRNA-Asp, -Asn, -His and -Tyr). Catalysis occurs through a double-displacement mechanism. The nucleophile active site attacks the C1' of nucleotide 34 to detach the guanine base from the RNA, forming a covalent enzyme-RNA intermediate. The proton acceptor active site deprotonates the incoming PreQ1, allowing a nucleophilic attack on the C1' of the ribose to form the product. After dissociation, two additional enzymatic reactions on the tRNA convert PreQ1 to queuine (Q), resulting in the hypermodified nucleoside queuosine (7-(((4,5-cis-dihydroxy-2-cyclopenten-1-yl)amino)methyl)-7-deazaguanosine). This is Queuine tRNA-ribosyltransferase from Brucella suis biovar 1 (strain 1330).